Consider the following 752-residue polypeptide: Complement C2 (752 aa).

An N-terminal signal peptide occupies residues 1–20 (MGPLMVLFCLLFLYPGLADS). 3 Sushi domains span residues 22–86 (PSCP…VCKP), 87–146 (VRCP…VCDN), and 149–206 (GHCP…ICRQ). Disulfide bonds link Cys24–Cys64, Cys51–Cys84, Cys89–Cys131, Cys117–Cys144, Cys151–Cys191, and Cys177–Cys204. A glycan (N-linked (GlcNAc...) asparagine) is linked at Asn29. A glycan (N-linked (GlcNAc...) asparagine) is linked at Asn112. The VWFA domain occupies 254 to 452 (NLYLLLDCSQ…KALHQVFEHM (199 aa)). The MIDAS-like motif signature appears at 260 to 264 (DCSQS). Residues Ser262 and Ser264 each coordinate Mg(2+). Residues Ser262 and Ser264 each coordinate Mn(2+). N-linked (GlcNAc...) asparagine glycosylation is found at Asn290 and Asn333. Thr337 contacts Mg(2+). Thr337 contacts Mn(2+). 3 cysteine pairs are disulfide-bonded: Cys463–Cys581, Cys492–Cys508, and Cys584–Cys600. The Peptidase S1 domain occupies 464–744 (GVGNMSANAS…MQPWLRQHLG (281 aa)). 2 N-linked (GlcNAc...) asparagine glycosylation sites follow: Asn467 and Asn471. Catalysis depends on charge relay system residues His507 and Asp561. N-linked (GlcNAc...) asparagine glycosylation occurs at Asn621. Intrachain disulfides connect Cys638–Cys665 and Cys675–Cys705. An N-linked (GlcNAc...) (complex) asparagine glycan is attached at Asn651. Ser679 functions as the Charge relay system in the catalytic mechanism.

This sequence belongs to the peptidase S1 family. As to quaternary structure, serine protease component of the C3 convertase, also named C4bC2b, composed of the serine protease complement C2b and complement C4b. Serine protease component of the C5 convertase, also named C4bC2bC3b, composed of the serine protease complement C2b, complement C3b, as well as complement C4b. In terms of assembly, (Microbial infection) Interacts with Schistosoma haematobium TOR (via N-terminal extracellular domain). This results in inhibition of the classical and lectin pathway of complement activation, probably due to interference with binding of C2a to C4b such that C3 convertase cannot be formed. This infers resistance to complement-mediated cell lysis, allowing parasite survival and infection. Mg(2+) is required as a cofactor. It depends on Mn(2+) as a cofactor. Cleaved and activated by different proteases depending on the complement pathway to generate complement C2a and serine protease complement C2b chains. Cleaved and activated by C1S following activation by the classical complement system. Cleaved and activated by MASP2 following activation by the lectin complement system. Cleaved and activated by GZMK following activation by the GZMK complement system.

The protein resides in the secreted. The protein localises to the cell surface. It catalyses the reaction Selective cleavage of Arg-|-Ser bond in complement component C3 alpha-chain to form C3a and C3b, and Arg-|-Xaa bond in complement component C5 alpha-chain to form C5a and C5b.. Functionally, precursor of the catalytic component of the C3 and C5 convertase complexes, which are part of the complement pathway, a cascade of proteins that leads to phagocytosis and breakdown of pathogens and signaling that strengthens the adaptive immune system. Component C2 is part of the classical, lectin and GZMK complement systems. Its function is as follows. Catalytic component of the complement C3 and C5 convertase complexes. Following complement activation, recruited to the surface of pathogens by complement C4b opsonin to form the C3 convertase, or C3b and C4b opsonins to form the C5 convertase. As part of the C3 convertase, cleaves and activate C3 into C3a anaphylatoxin and C3b opsonin, the next components of the complement pathways. As part of the C5 convertase, cleaves and activate C5 into C5a anaphylatoxin and C5b component of the membrane attack complex. The sequence is that of Complement C2 from Homo sapiens (Human).